We begin with the raw amino-acid sequence, 562 residues long: BOS complex subunit NCLN (562 aa).

Residues 1-41 form the signal peptide; it reads MLEEAGEVLESVLKASCLPLSFLLFVPAVLLLLGPPPAAEA. Topologically, residues 42-521 are extracellular; that stretch reads AHESTVYRMQ…VMNAYRVKPA (480 aa). The N-linked (GlcNAc...) asparagine glycan is linked to Asn240. The segment at 420-447 is disordered; it reads GFDEGHLQPNREGSTCRSADLHGSDADP. Residues 522–542 traverse the membrane as a helical segment; it reads IFDLLLAVCIAAYLGVAYVAV. At 543-562 the chain is on the cytoplasmic side; sequence QNFGLLYRMIQRLSLKTKQQ.

Belongs to the nicastrin family. In terms of assembly, component of the multi-pass translocon (MPT) complex.

It localises to the endoplasmic reticulum membrane. In terms of biological role, component of the multi-pass translocon (MPT) complex that mediates insertion of multi-pass membrane proteins into the lipid bilayer of membranes. The MPT complex takes over after the SEC61 complex: following membrane insertion of the first few transmembrane segments of proteins by the SEC61 complex, the MPT complex occludes the lateral gate of the SEC61 complex to promote insertion of subsequent transmembrane regions. May antagonize Nodal signaling and subsequent organization of axial structures during mesodermal patterning, via its interaction with NOMO. The protein is BOS complex subunit NCLN (NCLN) of Gallus gallus (Chicken).